Reading from the N-terminus, the 355-residue chain is Phosphoserine aminotransferase (355 aa).

R41 provides a ligand contact to L-glutamate. Pyridoxal 5'-phosphate-binding positions include 75–76, W99, T147, D166, and Q189; that span reads AS. At K190 the chain carries N6-(pyridoxal phosphate)lysine. 231–232 serves as a coordination point for pyridoxal 5'-phosphate; that stretch reads NT.

The protein belongs to the class-V pyridoxal-phosphate-dependent aminotransferase family. SerC subfamily. As to quaternary structure, homodimer. Requires pyridoxal 5'-phosphate as cofactor.

It localises to the cytoplasm. The catalysed reaction is O-phospho-L-serine + 2-oxoglutarate = 3-phosphooxypyruvate + L-glutamate. It carries out the reaction 4-(phosphooxy)-L-threonine + 2-oxoglutarate = (R)-3-hydroxy-2-oxo-4-phosphooxybutanoate + L-glutamate. It participates in amino-acid biosynthesis; L-serine biosynthesis; L-serine from 3-phospho-D-glycerate: step 2/3. Its pathway is cofactor biosynthesis; pyridoxine 5'-phosphate biosynthesis; pyridoxine 5'-phosphate from D-erythrose 4-phosphate: step 3/5. Functionally, catalyzes the reversible conversion of 3-phosphohydroxypyruvate to phosphoserine and of 3-hydroxy-2-oxo-4-phosphonooxybutanoate to phosphohydroxythreonine. In Bacteroides fragilis (strain ATCC 25285 / DSM 2151 / CCUG 4856 / JCM 11019 / LMG 10263 / NCTC 9343 / Onslow / VPI 2553 / EN-2), this protein is Phosphoserine aminotransferase.